The following is a 90-amino-acid chain: DNA-directed RNA polymerase subunit omega (90 aa).

It belongs to the RNA polymerase subunit omega family. The RNAP catalytic core consists of 2 alpha, 1 beta, 1 beta' and 1 omega subunit. When a sigma factor is associated with the core the holoenzyme is formed, which can initiate transcription.

It carries out the reaction RNA(n) + a ribonucleoside 5'-triphosphate = RNA(n+1) + diphosphate. In terms of biological role, promotes RNA polymerase assembly. Latches the N- and C-terminal regions of the beta' subunit thereby facilitating its interaction with the beta and alpha subunits. This is DNA-directed RNA polymerase subunit omega from Alteromonas mediterranea (strain DSM 17117 / CIP 110805 / LMG 28347 / Deep ecotype).